The sequence spans 102 residues: Co-chaperonin GroES (102 aa).

This sequence belongs to the GroES chaperonin family. Heptamer of 7 subunits arranged in a ring. Interacts with the chaperonin GroEL.

Its subcellular location is the cytoplasm. Together with the chaperonin GroEL, plays an essential role in assisting protein folding. The GroEL-GroES system forms a nano-cage that allows encapsulation of the non-native substrate proteins and provides a physical environment optimized to promote and accelerate protein folding. GroES binds to the apical surface of the GroEL ring, thereby capping the opening of the GroEL channel. This Chlamydia trachomatis serovar L2 (strain ATCC VR-902B / DSM 19102 / 434/Bu) protein is Co-chaperonin GroES.